The chain runs to 31 residues: Cytochrome b6-f complex subunit 6 (31 aa).

A helical transmembrane segment spans residues 4 to 24; it reads ITSYFGFLLAALTITSVLFIG.

Belongs to the PetL family. As to quaternary structure, the 4 large subunits of the cytochrome b6-f complex are cytochrome b6, subunit IV (17 kDa polypeptide, PetD), cytochrome f and the Rieske protein, while the 4 small subunits are PetG, PetL, PetM and PetN. The complex functions as a dimer.

It localises to the plastid. It is found in the chloroplast thylakoid membrane. Component of the cytochrome b6-f complex, which mediates electron transfer between photosystem II (PSII) and photosystem I (PSI), cyclic electron flow around PSI, and state transitions. PetL is important for photoautotrophic growth as well as for electron transfer efficiency and stability of the cytochrome b6-f complex. The sequence is that of Cytochrome b6-f complex subunit 6 from Nandina domestica (Heavenly bamboo).